A 73-amino-acid polypeptide reads, in one-letter code: Large ribosomal subunit protein bL31 (73 aa).

This sequence belongs to the bacterial ribosomal protein bL31 family. Type A subfamily. In terms of assembly, part of the 50S ribosomal subunit.

Its function is as follows. Binds the 23S rRNA. This is Large ribosomal subunit protein bL31 from Cereibacter sphaeroides (strain ATCC 17029 / ATH 2.4.9) (Rhodobacter sphaeroides).